The chain runs to 510 residues: Chromosomal replication initiator protein DnaA (510 aa).

The tract at residues 1–74 (MHTDLWERGC…EATLSELAGK (74 aa)) is domain I, interacts with DnaA modulators. A domain II region spans residues 74 to 173 (KPVRLELSLL…PTLSPAVSRG (100 aa)). The segment at 125 to 168 (ARHDPQSVVPTPGGSANGRAAPRVGEPGGPVGTSTLPVAPTLSP) is disordered. Positions 174 to 390 (RLNPALTFDT…GALRKVLAYS (217 aa)) are domain III, AAA+ region. Positions 218, 220, 221, and 222 each coordinate ATP. The domain IV, binds dsDNA stretch occupies residues 391–510 (RFSHKEISIN…LHVLEQTLKG (120 aa)).

The protein belongs to the DnaA family. Oligomerizes as a right-handed, spiral filament on DNA at oriC.

The protein localises to the cytoplasm. Functionally, plays an essential role in the initiation and regulation of chromosomal replication. ATP-DnaA binds to the origin of replication (oriC) to initiate formation of the DNA replication initiation complex once per cell cycle. Binds the DnaA box (a 9 base pair repeat at the origin) and separates the double-stranded (ds)DNA. Forms a right-handed helical filament on oriC DNA; dsDNA binds to the exterior of the filament while single-stranded (ss)DNA is stabiized in the filament's interior. The ATP-DnaA-oriC complex binds and stabilizes one strand of the AT-rich DNA unwinding element (DUE), permitting loading of DNA polymerase. After initiation quickly degrades to an ADP-DnaA complex that is not apt for DNA replication. Binds acidic phospholipids. This chain is Chromosomal replication initiator protein DnaA, found in Leptothrix cholodnii (strain ATCC 51168 / LMG 8142 / SP-6) (Leptothrix discophora (strain SP-6)).